Here is a 783-residue protein sequence, read N- to C-terminus: Cation/H(+) antiporter 2 (783 aa).

Helical transmembrane passes span 19–39, 43–63, 81–101, 121–141, 145–165, 186–206, 208–228, 242–262, 300–320, 323–343, 355–375, and 391–411; these read LNTM…FYLL, CGQA…PVLL, YYSF…GLEV, FVVS…LFGI, YFTF…PVVV, ALFI…FISG, IILE…INMV, YLSK…GITI, EFVL…IALT, FYLG…IGVI, YWLF…LLLD, and MMVA…SFLL.

It belongs to the monovalent cation:proton antiporter 2 (CPA2) transporter (TC 2.A.37) family. CHX (TC 2.A.37.4) subfamily. In terms of tissue distribution, specifically expressed in pollen.

The protein resides in the membrane. Functionally, may operate as a cation/H(+) antiporter. In Arabidopsis thaliana (Mouse-ear cress), this protein is Cation/H(+) antiporter 2 (CHX2).